The chain runs to 747 residues: Homeobox-leucine zipper protein GLABRA 2 (747 aa).

A disordered region spans residues 31–112 (RNASSGSTNP…KKYHRHTTDQ (82 aa)). A compositionally biased stretch (polar residues) spans 58 to 68 (EMSSENSGPTR). Residues 73–90 (EDLEGEDHDDEEEEEEDG) are compositionally biased toward acidic residues. The span at 97–107 (TNKRKRKKYHR) shows a compositional bias: basic residues. Residues 101–160 (KRKKYHRHTTDQIRHMEALFKETPHPDEKQRQQLSKQLGLAPRQVKFWFQNRRTQIKAIQ) constitute a DNA-binding region (homeobox). Residues 155–223 (QIKAIQERHE…LDKLRAALGR (69 aa)) adopt a coiled-coil conformation. The START domain occupies 250 to 489 (FALEKSRIAE…LQLHCERLVF (240 aa)).

It belongs to the HD-ZIP homeobox family. Class IV subfamily. As to quaternary structure, interacts with GIR1 and GIR2. Expressed in individual developing trichome cells of the emerging leaf primordia. Expressed in differentiating hairless cells of root epidermis.

It is found in the nucleus. Transcription factor involved in the determination of epidermal cell identity. Required for correct morphological development and maturation of trichomes. Regulates the frequency of trichome initiation and determines trichome spacing. Acts as a negative factor for root hair development. Required for ectopic repression of root hair development in a subset of epidermal cells. May suppress hair formation in root epidermis by promoting differentiation into hairless epidermal cells. Directly suppresses the bHLH transcription factor genes, RHD6, RSL1, RSL2, LRL1, and LRL2, which have diverse functions in root hair development. Required for normal development of seed coat mucilage. Involved in the control of seed oil accumulation. Acts as a negative regulator of anthocyanin biosynthesis. May directly repress the expression of some component genes from the MYB-bHLH-WD40 (MBW) transcriptional activator complex. The MBW complex activates the transcription of late biosynthesis genes in the flavonoid pathway, leading to the production of anthocyanins. The sequence is that of Homeobox-leucine zipper protein GLABRA 2 from Arabidopsis thaliana (Mouse-ear cress).